We begin with the raw amino-acid sequence, 338 residues long: MKTDDFDYKLPEELIASYPLENRDASRLLKLNKQTGEIADHKFTDFIDFISPGDLLVFNNSKVMLARLYGSKTTGAKLEYLIERIKNPKLFETHIKANRSPAIGSEIYVEDTLAKVLDKDGGMYLLEIQGDKDIYQLMEEFGHIPLPPYMKRDDEEFDAERYQTVYAQDLGSVAAPTAGLHFSKELMQQIKNKGVDIAYITLHVGSGTFKPVQVDDVESHKMHAEVISVPVEVCQKIRQTKENGGRVIAIGTTSVRSLETAGQNGQIEPYQGETDIFLYPGKKFNVVDAMITNFHLPKSTLIMLVSAFADKEKIIKAYEHAIAERYRFFSYGDAMFIY.

Belongs to the QueA family. Monomer.

The protein localises to the cytoplasm. It catalyses the reaction 7-aminomethyl-7-carbaguanosine(34) in tRNA + S-adenosyl-L-methionine = epoxyqueuosine(34) in tRNA + adenine + L-methionine + 2 H(+). It functions in the pathway tRNA modification; tRNA-queuosine biosynthesis. Transfers and isomerizes the ribose moiety from AdoMet to the 7-aminomethyl group of 7-deazaguanine (preQ1-tRNA) to give epoxyqueuosine (oQ-tRNA). This is S-adenosylmethionine:tRNA ribosyltransferase-isomerase from Francisella tularensis subsp. novicida (strain U112).